The following is a 235-amino-acid chain: MSVISMKQLLEAGVHFGHQTRRWNPKMKKYIFTERNGIYIIDLQKTVKKVEEAYNFVRELAANGGKILFVGTKKQAQESVKEEAERCDMFYVNQRWLGGTLTNFATIQKRIKRLREIEKMEEDGIFDVLPKKEVIRLKKEKERLEKFLGGIKDMKELPDALFVIDPRKERIAVAEARKLNIPIIGIVDTNCDPDEIDYVIPANDDAIRAVKLLTSKIADAVLEAKQGEEAAVAAE.

Belongs to the universal ribosomal protein uS2 family.

The protein is Small ribosomal subunit protein uS2 of Geobacillus kaustophilus (strain HTA426).